Here is a 152-residue protein sequence, read N- to C-terminus: Small ribosomal subunit protein uS19 (152 aa).

This sequence belongs to the universal ribosomal protein uS19 family.

In Podospora anserina (Pleurage anserina), this protein is Small ribosomal subunit protein uS19 (RPS15).